The primary structure comprises 517 residues: DNA-binding protein Ikaros (517 aa).

The tract at residues 1–71 is disordered; sequence MDVDEGQDMS…QSDEENGRAC (71 aa). A Phosphoserine modification is found at serine 13. Residue threonine 23 is modified to Phosphothreonine. Polar residues predominate over residues 37–47; sequence LSTTSGAQQNS. Residue lysine 58 forms a Glycyl lysine isopeptide (Lys-Gly) (interchain with G-Cter in SUMO) linkage. A phosphoserine mark is found at serine 63 and serine 101. Residues 117 to 139 form a C2H2-type 1 zinc finger; it reads LKCDICGIVCIGPNVLMVHKRSH. At threonine 140 the chain carries Phosphothreonine. The segment at 144–166 adopts a C2H2-type 2 zinc-finger fold; it reads FQCNQCGASFTQKGNLLRHIKLH. A required for both high-affinity DNA binding and pericentromeric heterochromatin localization region spans residues 153–162; that stretch reads FTQKGNLLRH. Serine 167 carries the post-translational modification Phosphoserine. Residues 172–194 form a C2H2-type 3 zinc finger; sequence FKCHLCNYACRRRDALTGHLRTH. A required for both high-affinity DNA binding and pericentromeric heterochromatin localization region spans residues 179 to 194; the sequence is YACRRRDALTGHLRTH. Serine 195 is subject to Phosphoserine. The C2H2-type 4 zinc-finger motif lies at 200–223; the sequence is HKCGYCGRSYKQRSSLEEHKERCH. Lysine 239 is covalently cross-linked (Glycyl lysine isopeptide (Lys-Gly) (interchain with G-Cter in SUMO)). Residues serine 259, serine 287, serine 293, serine 357, serine 360, serine 384, serine 386, serine 388, and serine 392 each carry the phosphoserine modification. A disordered region spans residues 376-400; that stretch reads SVSSEREASPSNSCQDSTDTESNAE. A Phosphothreonine modification is found at threonine 393. Phosphoserine occurs at positions 397 and 440. 2 C2H2-type zinc fingers span residues 457-479 and 488-512; these read YKCE…MGCH and FECN…RGEH. The interval 463-466 is required for binding PP1CC; sequence RVLF.

Belongs to the Ikaros C2H2-type zinc-finger protein family. In terms of assembly, heterodimer with other IKAROS family members. Interacts with IKZF4 and IKZF5. Component of the chromatin-remodeling NuRD repressor complex which includes at least HDAC1, HDAC2, RBBP4, RBBP7, IKZF1, MTA2, MBD2, MBD3, MTA1L1, CHD3 and CHD4. Interacts directly with the CHD4 component of the NuRD complex. Interacts directly with SMARCA4; the interaction associates IKFZ1 with the BAF complex. Interacts with SUMO1; the interaction sumoylates IKAROS, promoted by PIAS2 and PIAS3. Interacts with PIAS2 (isoform alpha); the interaction promotes sumoylation and reduces transcription repression. Interacts, to a lesser extent, with PIAS3. Interacts with PPP1CC; the interaction targets PPP1CC to pericentromeric heterochromatin, dephosphorylates IKAROS, stabilizes it and prevents it from degradation. Interacts with IKZF3. Phosphorylation at Ser-357 and Ser-360 downstream of SYK induces nuclear translocation. Phosphorylation controls cell-cycle progression from late G(1) stage to S stage. Hyperphosphorylated during G2/M phase. Dephosphorylated state during late G(1) phase. Phosphorylation on Thr-140 is required for DNA and pericentromeric location during mitosis. CK2 is the main kinase, in vitro. GSK3 and CDK may also contribute to phosphorylation of the C-terminal serine and threonine residues. Phosphorylation on these C-terminal residues reduces the DNA-binding ability. Phosphorylation/dephosphorylation events on Ser-13 and Ser-293 regulate TDT expression during thymocyte differentiation. Dephosphorylation by protein phosphatase 1 regulates stability and pericentromeric heterochromatin location. Phosphorylated in both lymphoid and non-lymphoid tissues. In terms of processing, sumoylated. Simultaneous sumoylation on the 2 sites results in a loss of both HDAC-dependent and HDAC-independent repression. Has no effect on pericentromeric heterochromatin location. Desumoylated by SENP1. Post-translationally, polyubiquitinated. Strongly expressed in T-cells and their progenitors,in B-cells, and in all early embryonic retinal progenitor cells (RPCs). Isoforms V and VI are the predominant isoforms in lymphocytes.

The protein resides in the nucleus. It localises to the cytoplasm. Functionally, transcription regulator of hematopoietic cell differentiation. Binds gamma-satellite DNA. Binds with higher affinity to gamma satellite A. Plays a role in the development of lymphocytes, B- and T-cells. Binds and activates the enhancer (delta-A element) of the CD3-delta gene. Repressor of the TDT (terminal deoxynucleotidyltransferase) gene during thymocyte differentiation. Regulates transcription through association with both HDAC-dependent and HDAC-independent complexes. Targets the 2 chromatin-remodeling complexes, NuRD and BAF (SWI/SNF), in a single complex (PYR complex), to the beta-globin locus in adult erythrocytes. Increases normal apoptosis in adult erythroid cells. Confers early temporal competence to retinal progenitor cells (RPCs). Function is isoform-specific and is modulated by dominant-negative inactive isoforms. This Mus musculus (Mouse) protein is DNA-binding protein Ikaros (Ikzf1).